The chain runs to 292 residues: Early E4 34 kDa protein (292 aa).

Belongs to the adenoviridae E4 30 to 34 kDa protein family. In terms of assembly, interacts with E1B-55k.

It is found in the host nucleus. The protein localises to the host cytoplasm. Its function is as follows. Plays a major role to prevent cellular inhibition of viral genome replication by nuclear bodies. Assembles an SCF-like E3 ubiquitin ligase complex based on the cellular proteins ELOB, ELOC, CUL5 and RBX1, in cooperation with viral E1B-55K. This viral RING-type ligase ubiquitinates cellular substrates prior to proteasomal degradation: p53/TP53, LIG4, MRE11-RAD50-NBS1 (MRN) complex, ITGA3, DAXX and BLM. The chain is Early E4 34 kDa protein from Human adenovirus D serotype 9 (HAdV-9).